The following is a 274-amino-acid chain: NADPH-dependent 7-cyano-7-deazaguanine reductase (274 aa).

81–83 (IES) is a substrate binding site. 83-84 (SK) provides a ligand contact to NADPH. Cysteine 182 acts as the Thioimide intermediate in catalysis. Aspartate 189 acts as the Proton donor in catalysis. 221 to 222 (HE) contacts substrate. 250–251 (RG) is an NADPH binding site.

It belongs to the GTP cyclohydrolase I family. QueF type 2 subfamily. As to quaternary structure, homodimer.

It is found in the cytoplasm. The enzyme catalyses 7-aminomethyl-7-carbaguanine + 2 NADP(+) = 7-cyano-7-deazaguanine + 2 NADPH + 3 H(+). The protein operates within tRNA modification; tRNA-queuosine biosynthesis. Functionally, catalyzes the NADPH-dependent reduction of 7-cyano-7-deazaguanine (preQ0) to 7-aminomethyl-7-deazaguanine (preQ1). This Hahella chejuensis (strain KCTC 2396) protein is NADPH-dependent 7-cyano-7-deazaguanine reductase.